The chain runs to 235 residues: Phosphoribosylaminoimidazole-succinocarboxamide synthase (235 aa).

The protein belongs to the SAICAR synthetase family.

It catalyses the reaction 5-amino-1-(5-phospho-D-ribosyl)imidazole-4-carboxylate + L-aspartate + ATP = (2S)-2-[5-amino-1-(5-phospho-beta-D-ribosyl)imidazole-4-carboxamido]succinate + ADP + phosphate + 2 H(+). It functions in the pathway purine metabolism; IMP biosynthesis via de novo pathway; 5-amino-1-(5-phospho-D-ribosyl)imidazole-4-carboxamide from 5-amino-1-(5-phospho-D-ribosyl)imidazole-4-carboxylate: step 1/2. The polypeptide is Phosphoribosylaminoimidazole-succinocarboxamide synthase (Streptococcus sanguinis (strain SK36)).